The following is a 101-amino-acid chain: Small ribosomal subunit protein uS14 (101 aa).

This sequence belongs to the universal ribosomal protein uS14 family. Part of the 30S ribosomal subunit. Contacts proteins S3 and S10.

Functionally, binds 16S rRNA, required for the assembly of 30S particles and may also be responsible for determining the conformation of the 16S rRNA at the A site. The protein is Small ribosomal subunit protein uS14 of Chlamydia pneumoniae (Chlamydophila pneumoniae).